The following is a 176-amino-acid chain: Membrane-anchored junction protein (176 aa).

Topologically, residues 1–151 are nuclear; that stretch reads MSLKPFTYPF…QHNSPPPKER (151 aa). The interval 59-150 is disordered; the sequence is AVMRKRKHMD…LQHNSPPPKE (92 aa). The span at 95–107 shows a compositional bias: basic and acidic residues; the sequence is PPVETRRNRERKT. The segment covering 108–120 has biased composition (polar residues); it reads QQGLQETLASDIT. A helical transmembrane segment spans residues 152-170; sequence AATGFFGFLSSLFPFRYFF. Residues 171–176 lie on the Perinuclear space side of the membrane; sequence RKSSHS.

This sequence belongs to the MAJIN family. As to quaternary structure, component of the MAJIN-TERB1-TERB2 complex, composed of MAJIN, TERB1 and TERB2.

It localises to the nucleus inner membrane. The protein resides in the chromosome. It is found in the telomere. Its function is as follows. Meiosis-specific telomere-associated protein involved in meiotic telomere attachment to the nucleus inner membrane, a crucial step for homologous pairing and synapsis. Component of the MAJIN-TERB1-TERB2 complex, which promotes telomere cap exchange by mediating attachment of telomeric DNA to the inner nuclear membrane and replacement of the protective cap of telomeric chromosomes: in early meiosis, the MAJIN-TERB1-TERB2 complex associates with telomeric DNA and the shelterin/telosome complex. During prophase, the complex matures and promotes release of the shelterin/telosome complex from telomeric DNA. In the complex, MAJIN acts as the anchoring subunit to the nucleus inner membrane. MAJIN shows DNA-binding activity, possibly for the stabilization of telomere attachment on the nucleus inner membrane. This chain is Membrane-anchored junction protein, found in Homo sapiens (Human).